Here is a 269-residue protein sequence, read N- to C-terminus: Probable cysteine protease avirulence protein AvrPpiC2 (269 aa).

A disordered region spans residues 1 to 39; it reads MTIVSGHIGKHPSLTTVQAGSSASVENQMPDPAQFSDGR. Residues 13–27 are compositionally biased toward polar residues; that stretch reads SLTTVQAGSSASVEN. Catalysis depends on residues cysteine 72, histidine 213, and aspartate 230.

This sequence belongs to the peptidase C58 family.

Its function is as follows. Potential cysteine protease. Avirulence protein, which may be essential during infection of plant cells from Pea and some Arabidopsis thaliana cultivars. May act by affecting the plant defense system. In plants lacking appropriate resistance (R) gene, it probably impairs the plant defense system and leads to the bacteria multiplication. In contrast, in plants containing the appropriate R protein, it is unable to induce disease symptoms, explaining its avirulence name. The chain is Probable cysteine protease avirulence protein AvrPpiC2 (avrPpiC2) from Pseudomonas syringae pv. pisi.